Consider the following 441-residue polypeptide: Ribulose bisphosphate carboxylase large chain (441 aa).

Positions 89 and 139 each coordinate substrate. The active-site Proton acceptor is Lys-141. Lys-143 lines the substrate pocket. 3 residues coordinate Mg(2+): Lys-167, Asp-169, and Glu-170. Lys-167 is modified (N6-carboxylysine). The active-site Proton acceptor is His-260. Substrate is bound by residues Xaa-261, His-293, and Ser-345.

The protein belongs to the RuBisCO large chain family. Type I subfamily. As to quaternary structure, heterohexadecamer of 8 large chains and 8 small chains; disulfide-linked. The disulfide link is formed within the large subunit homodimers. It depends on Mg(2+) as a cofactor. In terms of processing, the disulfide bond which can form in the large chain dimeric partners within the hexadecamer appears to be associated with oxidative stress and protein turnover.

It localises to the plastid. Its subcellular location is the chloroplast. It carries out the reaction 2 (2R)-3-phosphoglycerate + 2 H(+) = D-ribulose 1,5-bisphosphate + CO2 + H2O. It catalyses the reaction D-ribulose 1,5-bisphosphate + O2 = 2-phosphoglycolate + (2R)-3-phosphoglycerate + 2 H(+). In terms of biological role, ruBisCO catalyzes two reactions: the carboxylation of D-ribulose 1,5-bisphosphate, the primary event in carbon dioxide fixation, as well as the oxidative fragmentation of the pentose substrate in the photorespiration process. Both reactions occur simultaneously and in competition at the same active site. This is Ribulose bisphosphate carboxylase large chain from Apocynum cannabinum (Hemp dogbane).